The following is a 376-amino-acid chain: MAKNYDSVEFPYCDEVSKYERLAKIGQGTFGEVFKAKHRQTGKKVALKKVLMENEKEGFPITALREIKILQLLKHENVVNLIEICRTKVSPTANQYNRCKGTIFLVFDFCEHDLAGLLSNAHVKFTLSEIKKVMQMLLNGLYYIHRNKILHRDMKAANVLITRDGVLKLADFGLARAFSLAKNSQPNKYTNRVVTLWYRPPELLLGERDYGPPIDLWGAGCIMAEMWTRSPIMQGNTEQHQLTLISQLCGSITPEVWPNVDKYELYQKLELPKGQKRKVKDRLKAYVKDPHALDLIDKLLVLDPTQRLDSDDALNNDFFWSDPMPSDLKNMLSTHNQSMFEYLAPPRRRGGHMPQQPANQARNPAATNQSEFERVF.

The Protein kinase domain occupies 19–319 (YERLAKIGQG…SDDALNNDFF (301 aa)). ATP contacts are provided by residues 25 to 33 (IGQGTFGEV) and Lys-48. Residue Asp-153 is the Proton acceptor of the active site. The interval 345–376 (PPRRRGGHMPQQPANQARNPAATNQSEFERVF) is disordered. Positions 354 to 369 (PQQPANQARNPAATNQ) are enriched in low complexity.

It belongs to the protein kinase superfamily. CMGC Ser/Thr protein kinase family. CDC2/CDKX subfamily. As to quaternary structure, associates with cyclin-T to form P-TEFb.

Its subcellular location is the nucleus. The enzyme catalyses L-seryl-[protein] + ATP = O-phospho-L-seryl-[protein] + ADP + H(+). It carries out the reaction L-threonyl-[protein] + ATP = O-phospho-L-threonyl-[protein] + ADP + H(+). It catalyses the reaction [DNA-directed RNA polymerase] + ATP = phospho-[DNA-directed RNA polymerase] + ADP + H(+). Functionally, member of the cyclin-dependent kinase pair (CDK9/cyclin-T) complex, also called positive transcription elongation factor B (P-TEFb), which is proposed to facilitate the transition from abortive to production elongation by phosphorylating the CTD (C-terminal domain) of the large subunit of RNA polymerase II (RNAP II) and SUPT5H. The sequence is that of Cyclin-dependent kinase 9-A (cdk9-a) from Xenopus laevis (African clawed frog).